Here is a 610-residue protein sequence, read N- to C-terminus: All-trans-retinol 13,14-reductase (610 aa).

Positions 1-18 (MWLPLVLLLAVLLLAVLC) are cleaved as a signal peptide.

It belongs to the carotenoid/retinoid oxidoreductase family. CrtISO subfamily. The cofactor is NAD(+). Requires NADP(+) as cofactor. FAD serves as cofactor. Expressed in liver; expression positively correlates with obesity and liver steatosis. Expressed in adipose tissue; expression tends to be decreased in obese versus lean individuals.

The protein localises to the endoplasmic reticulum membrane. The enzyme catalyses all-trans-13,14-dihydroretinol + A = all-trans-retinol + AH2. Catalyzes the saturation of all-trans-retinol to all-trans-13,14-dihydroretinol. Does not exhibit any activity toward all-trans-retinoic acid, nor 9-cis, 11-cis or 13-cis-retinol isomers. May play a role in the metabolism of vitamin A. Independently of retinol conversion, may regulate liver metabolism upstream of MLXIPL/ChREBP. May play a role in adipocyte differentiation. In Homo sapiens (Human), this protein is All-trans-retinol 13,14-reductase (RETSAT).